Here is a 764-residue protein sequence, read N- to C-terminus: Ribosomal protein S6 kinase alpha-6 (764 aa).

Residues 1-24 form a disordered region; it reads MLPFAPVEDPWDQEDMEVFGSTSS. The 258-residue stretch at 93–350 folds into the Protein kinase 1 domain; it reads FDLLKVLGQG…VEEVKRHAFF (258 aa). Residues 99–107 and K125 each bind ATP; that span reads LGQGSFGKV. D218 functions as the Proton acceptor in the catalytic mechanism. S252, S392, and S409 each carry phosphoserine. In terms of domain architecture, AGC-kinase C-terminal spans 351–420; that stretch reads ASIDWNKLYK…VATSIAEEYK (70 aa). Residues 446-706 form the Protein kinase 2 domain; sequence YELKEDIGIG…VLKHPWITQR (261 aa). ATP is bound by residues 452–460 and K475; that span reads IGIGSYSVC. D563 functions as the Proton acceptor in the catalytic mechanism. T601 carries the post-translational modification Phosphothreonine.

This sequence belongs to the protein kinase superfamily. AGC Ser/Thr protein kinase family. S6 kinase subfamily. As to quaternary structure, forms a complex with MAPK3/ERK1 but not with MAPK9 or MAPK14 in serum-starved cells. Mg(2+) is required as a cofactor. In terms of processing, phosphorylated at Ser-252, Ser-392, and Ser-409 in serum-starved cells.

It localises to the cytoplasm. Its subcellular location is the cytosol. It is found in the nucleus. It catalyses the reaction L-seryl-[protein] + ATP = O-phospho-L-seryl-[protein] + ADP + H(+). The catalysed reaction is L-threonyl-[protein] + ATP = O-phospho-L-threonyl-[protein] + ADP + H(+). Its activity is regulated as follows. Constitutively activated by phosphorylation at Ser-252, Ser-392, and Ser-409 in serum-starved cells. Does not require growth factor stimulation for significant kinase activity. Its function is as follows. Constitutively active serine/threonine-protein kinase that exhibits growth-factor-independent kinase activity and that may participate in p53/TP53-dependent cell growth arrest signaling and play an inhibitory role during embryogenesis. The polypeptide is Ribosomal protein S6 kinase alpha-6 (Rps6ka6) (Mus musculus (Mouse)).